A 145-amino-acid polypeptide reads, in one-letter code: Probable DNA-directed RNA polymerases I and III subunit RPAC2 (145 aa).

Residues 1–52 (MGKKSEKKVVEETMEVDEQPAVEPEAVPEEEPEVEDEDLNVPKKKKMEILDP) form a disordered region. The segment covering 12-39 (ETMEVDEQPAVEPEAVPEEEPEVEDEDL) has biased composition (acidic residues).

It belongs to the archaeal Rpo11/eukaryotic RPB11/RPC19 RNA polymerase subunit family. Component of the RNA polymerase I (Pol I) and RNA polymerase III (Pol III) complexes consisting of at least 13 and 17 subunits, respectively.

It is found in the nucleus. In terms of biological role, DNA-dependent RNA polymerase catalyzes the transcription of DNA into RNA using the four ribonucleoside triphosphates as substrates. Common core component of RNA polymerases I and III which synthesize ribosomal RNA precursors and small RNAs, such as 5S rRNA and tRNAs, respectively. This chain is Probable DNA-directed RNA polymerases I and III subunit RPAC2 (rpac-19), found in Caenorhabditis briggsae.